A 1053-amino-acid polypeptide reads, in one-letter code: Integrin alpha-3 (1053 aa).

An N-terminal signal peptide occupies residues 1-32; it reads MGPGPCRVPRAPGWLLRALALMVAACGRVAFA. Residues 33-993 lie on the Extracellular side of the membrane; it reads FNLDTRFLVV…LVEELPAEIE (961 aa). 7 FG-GAP repeats span residues 38–103, 110–171, 185–235, 236–293, 294–355, 357–412, and 416–478; these read RFLV…KDDC, EKSD…DLQL, CNSN…WDLS, EYSY…GGDL, QRKQ…ASFP, QPSL…GLLR, and QIIH…VARP. N-linked (GlcNAc...) asparagine glycosylation is present at N86. 3 disulfides stabilise this stretch: C94–C103, C140–C162, and C185–C197. 2 disulfides stabilise this stretch: C486–C491 and C497–C551. N-linked (GlcNAc...) asparagine glycans are attached at residues N501, N512, N574, and N606. A disulfide bond links C616 and C622. 4 N-linked (GlcNAc...) asparagine glycosylation sites follow: N657, N699, N843, and N859. C695 and C704 are disulfide-bonded. 2 cysteine pairs are disulfide-bonded: C848-C906 and C913-C918. Positions 865 to 890 are disordered; that stretch reads PGVTPLSPQRRRRQLDPGGDQSSPPV. N-linked (GlcNAc...) asparagine glycosylation is found at N925, N928, N937, and N971. A helical transmembrane segment spans residues 994 to 1021; it reads LWLVLVAVGAGLLLLGLIILLLWKCGFF. C1018 is lipidated: S-palmitoyl cysteine. At 1022–1053 the chain is on the cytoplasmic side; it reads KRARTRALYEAKRQKAEMKSQPSETERLTDDY.

The protein belongs to the integrin alpha chain family. Heterodimer of an alpha and a beta subunit. The alpha subunit is composed of a heavy and a light chain linked by a disulfide bond. Alpha-3 associates with beta-1. Interacts with HPS5. Interacts with FAP (seprase); the interaction occurs at the cell surface of invadopodia membrane in a collagen-dependent manner. As to expression, isoform 1 and isoform 2 are expressed in heart and brain. Only isoform 1 is detected in lung.

Its subcellular location is the cell membrane. It is found in the cell projection. The protein resides in the invadopodium membrane. The protein localises to the filopodium membrane. Its function is as follows. Integrin alpha-3/beta-1 is a receptor for fibronectin, laminin, collagen, epiligrin, thrombospondin and CSPG4. Integrin alpha-3/beta-1 provides a docking site for FAP (seprase) at invadopodia plasma membranes in a collagen-dependent manner and hence may participate in the adhesion, formation of invadopodia and matrix degradation processes, promoting cell invasion. Alpha-3/beta-1 may mediate with LGALS3 the stimulation by CSPG4 of endothelial cells migration. This Mus musculus (Mouse) protein is Integrin alpha-3 (Itga3).